We begin with the raw amino-acid sequence, 460 residues long: Elongation factor 1-alpha (460 aa).

N,N,N-trimethylglycine is present on Gly-2. N6,N6-dimethyllysine; alternate is present on Lys-3. Residue Lys-3 is modified to N6-methyllysine; alternate. The 236-residue stretch at 6–241 (KTHINVVVIG…DSIEPPKRPT (236 aa)) folds into the tr-type G domain. The G1 stretch occupies residues 15-22 (GHVDSGKS). Residue 15-22 (GHVDSGKS) coordinates GTP. Positions 71–75 (GITID) are G2. N6,N6,N6-trimethyllysine is present on Lys-80. The G3 stretch occupies residues 92–95 (DAPG). Residues 92-96 (DAPGH) and 154-157 (NKMD) contribute to the GTP site. The interval 154–157 (NKMD) is G4. Residues 193-195 (SGF) are G5. Position 317 is an N6,N6-dimethyllysine; alternate (Lys-317). Lys-317 carries the N6-methyllysine; alternate modification. Lys-391 carries the N6-methyllysine modification.

The protein belongs to the TRAFAC class translation factor GTPase superfamily. Classic translation factor GTPase family. EF-Tu/EF-1A subfamily.

The protein localises to the cytoplasm. Functionally, this protein promotes the GTP-dependent binding of aminoacyl-tRNA to the A-site of ribosomes during protein biosynthesis. This Hypocrea jecorina (Trichoderma reesei) protein is Elongation factor 1-alpha (tef1).